We begin with the raw amino-acid sequence, 91 residues long: Antitoxin RelJ (91 aa).

It belongs to the phD/YefM antitoxin family. As to quaternary structure, homodimer.

Antitoxin component of a type II toxin-antitoxin (TA) system. A probable antitoxin for the putative mRNA interferase RelK. The polypeptide is Antitoxin RelJ (relJ) (Mycobacterium tuberculosis (strain CDC 1551 / Oshkosh)).